Here is a 66-residue protein sequence, read N- to C-terminus: Stress-associated endoplasmic reticulum protein 1 (66 aa).

Residues methionine 1 to alanine 31 are disordered. Residues asparagine 17–asparagine 30 are compositionally biased toward polar residues. The chain crosses the membrane as a helical span at residues glycine 39–isoleucine 59.

The protein belongs to the RAMP4 family. In terms of assembly, interacts with SEC61B, SEC61A1 and the SEC61 complex. Interacts with CANX.

The protein localises to the membrane. It localises to the endoplasmic reticulum membrane. In terms of biological role, interacts with target proteins during their translocation into the lumen of the endoplasmic reticulum. Protects unfolded target proteins against degradation during ER stress. May facilitate glycosylation of target proteins after termination of ER stress. May modulate the use of N-glycosylation sites on target proteins. The protein is Stress-associated endoplasmic reticulum protein 1 (SERP1) of Bos taurus (Bovine).